Here is a 455-residue protein sequence, read N- to C-terminus: MNSFNKDEFDCHILDEGFTAKDILDQKINEVSSDDKDAFYVADLGDVLKKHLRWLKALPVTPFYAVKCNDSRALVNTLAAITVDCASKTEIQLVQGLGVPPERVIYANPCKQVSQIKYAASNGVQMMTFDSEIELMKVARAHPKVTKLVLRIATDDSKAVCRLSVKFGATLRTSRLLLERAKELNIDVIGVSFHVGSGCTDPETFVQALSDARCVFDMGTEVGFSMYLLDIGGGFPGSEDTKLKFEEITSVINPALDKYFPPDSGVRVIAEPGRYYVASAFTLAVNIIAKKIVSKGSDDEDESSEQTFMYYVNDGVYGSFNCILYDHAHVKPLLPKRPKPDEKYYSSSIWGPTCDGLDRIVERCNLPEMHVGDWMLFENMGAYTVAAASTFNGFQRPSIYYVMSRPMWQLMKQIQNHGFPPEVEEQDVGTLPISCAQESGMDRHPAACASASINV.

An N6-(pyridoxal phosphate)lysine modification is found at Lys-67. Pyridoxal 5'-phosphate contacts are provided by residues Ser-197, Gly-234, and 271 to 274; that span reads EPGR. Position 297 is a phosphoserine; by CK2 (Ser-297). 325 to 326 contributes to the substrate binding site; it reads YD. The Proton donor; shared with dimeric partner role is filled by Cys-354. Cys-354 bears the S-nitrosocysteine mark. Residue Asp-355 coordinates substrate. Residue Tyr-383 coordinates pyridoxal 5'-phosphate.

This sequence belongs to the Orn/Lys/Arg decarboxylase class-II family. Homodimer. Only the dimer is catalytically active, as the active sites are constructed of residues from both monomers. Pyridoxal 5'-phosphate is required as a cofactor.

It catalyses the reaction L-ornithine + H(+) = putrescine + CO2. It functions in the pathway amine and polyamine biosynthesis; putrescine biosynthesis via L-ornithine pathway; putrescine from L-ornithine: step 1/1. With respect to regulation, inhibited by antizymes (AZs) OAZ1, OAZ2 and OAZ3 in response to polyamine levels. AZs inhibit the assembly of the functional homodimer by binding to ODC monomers. Additionally, OAZ1 targets ODC monomers for ubiquitin-independent proteolytic destruction by the 26S proteasome. In terms of biological role, catalyzes the first and rate-limiting step of polyamine biosynthesis that converts ornithine into putrescine, which is the precursor for the polyamines, spermidine and spermine. Polyamines are essential for cell proliferation and are implicated in cellular processes, ranging from DNA replication to apoptosis. This chain is Ornithine decarboxylase (ODC1), found in Cricetulus griseus (Chinese hamster).